A 487-amino-acid polypeptide reads, in one-letter code: MVETSIDMEEGTLEIGMEYRTVSGVAGPLVILDKVKGPKYQEIVNIRLGDGSTRRGQVLEVDGEKAVVQVFEGTSGIDNKFTTVQFTGEVLKTPVSLDMLGRIFNGSGKPIDNGPPILPEAYLDISGSSINPSERTYPEEMIQTGISTIDVMNSIARGQKIPLFSAAGLPHNEIAAQICRQAGLVKRLEKTENLIQEDHGEDNFAIVFAAMGVNMETAQFFKRDFEENGSMERVTLFLNLANDPTIERIITPRIALTTAEYLAYECGKHVLVILTDMSSYADALREVSAAREEVPGRRGYPGYMYTDLATIYERAGRIEGRKGSITQIPILTMPNDDITHPTPDLTGYITEGQIYIDRQLHNRQIYPPINVLPSLSRLMKSAIGEGMTRKDHSDVSNQLYANYAIGKDVQAMKAVVGEEALSSEDLLYLEFLDKFERKFVMQGAYDTRNIFQSLDLAWTLLRIFPRELLHRIPAKTLDQFYSRDSTS.

It belongs to the ATPase alpha/beta chains family. As to quaternary structure, V-ATPase is a heteromultimeric enzyme composed of a peripheral catalytic V1 complex (components A to H) attached to an integral membrane V0 proton pore complex (components: a, c, c'', d and e).

It is found in the vacuole membrane. Its function is as follows. Non-catalytic subunit of the peripheral V1 complex of vacuolar ATPase. V-ATPase is responsible for acidifying a variety of intracellular compartments in eukaryotic cells. The chain is V-type proton ATPase subunit B3 (VHA-B3) from Arabidopsis thaliana (Mouse-ear cress).